A 185-amino-acid polypeptide reads, in one-letter code: Segregation and condensation protein B (185 aa).

Belongs to the ScpB family. In terms of assembly, homodimer. Homodimerization may be required to stabilize the binding of ScpA to the Smc head domains. Component of a cohesin-like complex composed of ScpA, ScpB and the Smc homodimer, in which ScpA and ScpB bind to the head domain of Smc. The presence of the three proteins is required for the association of the complex with DNA.

It localises to the cytoplasm. Participates in chromosomal partition during cell division. May act via the formation of a condensin-like complex containing Smc and ScpA that pull DNA away from mid-cell into both cell halves. This is Segregation and condensation protein B from Alkaliphilus oremlandii (strain OhILAs) (Clostridium oremlandii (strain OhILAs)).